The sequence spans 295 residues: Ent-pimara-9(11),15-diene synthase (295 aa).

Belongs to the terpene synthase family. As to quaternary structure, monomer. It depends on a divalent metal cation as a cofactor.

The enzyme catalyses ent-copalyl diphosphate = ent-pimara-9(11),15-diene + diphosphate. The protein operates within antibiotic biosynthesis. Functionally, involved in viguiepinol biosynthesis. Catalyzes the conversion of copalyl diphosphate (ent-CDP) into pimara-9(11),15-diene (PMD). The chain is Ent-pimara-9(11),15-diene synthase from Streptomyces sp. (strain KO-3988).